A 273-amino-acid polypeptide reads, in one-letter code: Manganese catalase (273 aa).

Position 35 (Glu35) interacts with Mn(2+). Positions 57 and 61 each coordinate Ca(2+). Positions 66, 69, 149, and 182 each coordinate Mn(2+). Residues Asn220, Ser222, and Gly224 each contribute to the Ca(2+) site. Positions 254–273 are disordered; sequence EKPELKPAPPFVHNTLPGRE.

This sequence belongs to the manganese catalase family. Ca(2+) serves as cofactor. Requires Mn(2+) as cofactor.

It catalyses the reaction 2 H2O2 = O2 + 2 H2O. Its function is as follows. Catalyzes the decomposition of hydrogen peroxide into water and oxygen. In Bacillus subtilis (strain 168), this protein is Manganese catalase (ydbD).